Here is a 60-residue protein sequence, read N- to C-terminus: Large ribosomal subunit protein uL30 (60 aa).

The protein belongs to the universal ribosomal protein uL30 family. In terms of assembly, part of the 50S ribosomal subunit.

The sequence is that of Large ribosomal subunit protein uL30 from Streptococcus uberis (strain ATCC BAA-854 / 0140J).